Consider the following 333-residue polypeptide: MKMDVSVRAAGCSDDLSSGEADVDPKLLELTADEEKCRSIRRQYRQLMYCVRQNREDIVSSANNSLTEALEEANVLFDGVSRTREAALDARFLVMASDLGKEKAKQLNSDMNFFNQLAFCDFLFLFVGLNWMEGDPDKLSDCDDSIALSFWKAIEKEATSWMVKAETFHFVFGSFKLERSAPKPRLEHQKKVRKMEENGNMPTKLQKLDLSSYPEATEKNVERILGLLQTYFRKYPDTPVSYFEFVIDPNSFSRTVENIFYVSFIVRDGFARIRLDEDRLPILEPMNVNQMGEGNDSSCHGRKQGVISLTLQEWKNIVAAFEISEAMITYSSY.

It belongs to the NSE4 family. As to quaternary structure, component of the SMC5-SMC6 complex which consists at least of SMC5, SMC6, NSMCE2, NSMCE1, NSMCE4A or EID3 and NSMCE3; EID3 seems to be a testis-specific subunit. NSMCE1, NSMCE4A or EID3 and NSMCE3 probably form a subcomplex that bridges the head domains of the SMC5:SMC6 heterodimer. Homodimer, and heterodimer with EID2. Interacts with the C-terminal region of CREBBP. In terms of tissue distribution, highly expressed in testis.

Its subcellular location is the nucleus. The protein resides in the cytoplasm. It is found in the chromosome. It localises to the telomere. Tissue-specific component of the SMC5-SMC6 complex, a complex involved in repair of DNA double-strand breaks by homologous recombination. The complex may promote sister chromatid homologous recombination by recruiting the SMC1-SMC3 cohesin complex to double-strand breaks. The complex is required for telomere maintenance via recombination and mediates sumoylation of shelterin complex (telosome) components. In terms of biological role, acts as a repressor of nuclear receptor-dependent transcription possibly by interfering with CREBBP-dependent coactivation. May function as a coinhibitor of other CREBBP/EP300-dependent transcription factors. This Homo sapiens (Human) protein is EP300-interacting inhibitor of differentiation 3.